Here is a 101-residue protein sequence, read N- to C-terminus: NADH-quinone oxidoreductase subunit K (101 aa).

3 consecutive transmembrane segments (helical) span residues 5 to 25, 30 to 50, and 61 to 81; these read LTHY…GIIL, IVIL…LVAF, and VLVF…LALI.

It belongs to the complex I subunit 4L family. NDH-1 is composed of 14 different subunits. Subunits NuoA, H, J, K, L, M, N constitute the membrane sector of the complex.

It is found in the cell inner membrane. The catalysed reaction is a quinone + NADH + 5 H(+)(in) = a quinol + NAD(+) + 4 H(+)(out). In terms of biological role, NDH-1 shuttles electrons from NADH, via FMN and iron-sulfur (Fe-S) centers, to quinones in the respiratory chain. The immediate electron acceptor for the enzyme in this species is believed to be ubiquinone. Couples the redox reaction to proton translocation (for every two electrons transferred, four hydrogen ions are translocated across the cytoplasmic membrane), and thus conserves the redox energy in a proton gradient. This Methylacidiphilum infernorum (isolate V4) (Methylokorus infernorum (strain V4)) protein is NADH-quinone oxidoreductase subunit K.